Reading from the N-terminus, the 196-residue chain is MDLDFHIKPEIRVLGIDDSALLNEKVMIVGTVFRGGDWMDGVLRSEITRDGLDATEVISTMIKNSRHYAQLRIVMLDGVTYGGFNVVDIEELYRETGLPVIVVMRAYPDFEKIRAALRHFSDGELRWEIIKKAGKIEKLVTEKNGTPIYIQKAGIGLKSAEKIVRLTSIRSNIPEPLRVAHLIATGIIFGESRGRA.

The protein belongs to the UPF0215 family.

The sequence is that of UPF0215 protein MA_4269 from Methanosarcina acetivorans (strain ATCC 35395 / DSM 2834 / JCM 12185 / C2A).